Consider the following 582-residue polypeptide: tRNA(Ile)-lysidine synthase (582 aa).

46–51 (SGGADS) lines the ATP pocket. One can recognise a CMP/dCMP-type deaminase domain in the interval 402–525 (DPLHAAMGEA…DLLADHWGWR (124 aa)). Positions 548–582 (VRRRSADTPQTPNAETPAPRSSRSTSASGKPTMLE) are disordered. Over residues 563–575 (TPAPRSSRSTSAS) the composition is skewed to low complexity.

This sequence belongs to the tRNA(Ile)-lysidine synthase family.

It is found in the cytoplasm. It catalyses the reaction cytidine(34) in tRNA(Ile2) + L-lysine + ATP = lysidine(34) in tRNA(Ile2) + AMP + diphosphate + H(+). Functionally, ligates lysine onto the cytidine present at position 34 of the AUA codon-specific tRNA(Ile) that contains the anticodon CAU, in an ATP-dependent manner. Cytidine is converted to lysidine, thus changing the amino acid specificity of the tRNA from methionine to isoleucine. The protein is tRNA(Ile)-lysidine synthase of Deinococcus radiodurans (strain ATCC 13939 / DSM 20539 / JCM 16871 / CCUG 27074 / LMG 4051 / NBRC 15346 / NCIMB 9279 / VKM B-1422 / R1).